The following is a 581-amino-acid chain: Adenine deaminase (581 aa).

This sequence belongs to the metallo-dependent hydrolases superfamily. Adenine deaminase family. The cofactor is Mn(2+).

The enzyme catalyses adenine + H2O + H(+) = hypoxanthine + NH4(+). This chain is Adenine deaminase, found in Lysinibacillus sphaericus (strain C3-41).